We begin with the raw amino-acid sequence, 298 residues long: Enoyl-CoA hydratase AKT6-1 (298 aa).

Residues 1-23 (MTFSTTKSVAMSPDDDAPSFDIN) form a disordered region.

This sequence belongs to the enoyl-CoA hydratase/isomerase family.

It functions in the pathway mycotoxin biosynthesis. Its function is as follows. Enoyl-CoA hydratase; part of the gene clusters that mediate the biosynthesis of the host-selective toxins (HSTs) AK-toxins responsible for Japanese pear black spot disease by the Japanese pear pathotype. AK-toxins are esters of 9,10-epoxy 8-hydroxy 9-methyldecatrienoic acid (EDA). On cellular level, AK-toxins affect plasma membrane of susceptible cells and cause a sudden increase in loss of K(+) after a few minutes of toxin treatment. The acyl-CoA ligase AKT1, the hydrolase AKT2 and enoyl-CoA hydratase AKT3 are all involved in the biosynthesis of the AK-, AF- and ACT-toxin common 9,10-epoxy-8-hydroxy-9-methyl-decatrienoic acid (EDA) structural moiety. Part of the EDA biosynthesis occurs in the peroxisome since these 3 enzymes are localized in peroxisomes. The exact roles of the 3 enzymes, as well as of additional AK-toxin clusters enzymes, including AKT4, AKT6 and AKTS1, have still to be elucidated. The Cytochrome P450 monooxygenase AKT7 on the other side functions to limit production of EDA and AK-toxin, probably via the catalysis of a side reaction of EDA or its precursor. This is Enoyl-CoA hydratase AKT6-1 from Alternaria alternata (Alternaria rot fungus).